A 143-amino-acid polypeptide reads, in one-letter code: Nucleoside diphosphate kinase (143 aa).

The ATP site is built by lysine 11, phenylalanine 59, arginine 87, threonine 93, arginine 104, and asparagine 114. Histidine 117 functions as the Pros-phosphohistidine intermediate in the catalytic mechanism.

The protein belongs to the NDK family. In terms of assembly, homotetramer. Requires Mg(2+) as cofactor.

The protein resides in the cytoplasm. The catalysed reaction is a 2'-deoxyribonucleoside 5'-diphosphate + ATP = a 2'-deoxyribonucleoside 5'-triphosphate + ADP. It catalyses the reaction a ribonucleoside 5'-diphosphate + ATP = a ribonucleoside 5'-triphosphate + ADP. In terms of biological role, major role in the synthesis of nucleoside triphosphates other than ATP. The ATP gamma phosphate is transferred to the NDP beta phosphate via a ping-pong mechanism, using a phosphorylated active-site intermediate. This Shewanella piezotolerans (strain WP3 / JCM 13877) protein is Nucleoside diphosphate kinase.